A 1026-amino-acid chain; its full sequence is Multidrug resistance protein MdtC (1026 aa).

The next 11 helical transmembrane spans lie at 15-35 (ILIA…LPVA), 333-353 (EVEE…FLFL), 360-380 (LIPA…MYLC), 387-407 (LSLM…IVVL), 431-451 (VGFT…PLLL), 463-483 (FAVT…TLTP), 528-548 (LVGV…IAIP), 853-873 (LILI…LYES), 897-917 (LFNA…IGIV), 953-973 (PIMM…LSGG), and 984-1004 (ITIV…TPVV).

The protein belongs to the resistance-nodulation-cell division (RND) (TC 2.A.6) family. MdtC subfamily. As to quaternary structure, part of a tripartite efflux system composed of MdtA, MdtB and MdtC. MdtC forms a heteromultimer with MdtB.

Its subcellular location is the cell inner membrane. The polypeptide is Multidrug resistance protein MdtC (Salmonella enteritidis PT4 (strain P125109)).